Here is a 798-residue protein sequence, read N- to C-terminus: Integrin beta-1 (798 aa).

Positions 1 to 20 (MNLQLIFWIGLISSVCCVFG) are cleaved as a signal peptide. Residues 21–728 (QADEDRCLKA…ETPECPTGPD (708 aa)) are Extracellular-facing. The 51-residue stretch at 26–76 (RCLKANAKSCGECIQAGPNCGWCTNSTFLQEGMPTSARCDDLEALKKKGCH) folds into the PSI domain. 28 cysteine pairs are disulfide-bonded: C27-C45, C35-C464, C38-C64, C48-C75, C207-C213, C261-C301, C401-C415, C435-C462, C466-C486, C477-C489, C491-C500, C502-C533, C516-C531, C525-C536, C538-C553, C555-C576, C560-C574, C568-C579, C581-C590, C592-C615, C599-C613, C607-C618, C620-C630, C633-C636, C640-C691, C646-C665, C649-C661, and C699-C723. The span at 75–91 (CHPNDTENPRGSKDIKK) shows a compositional bias: basic and acidic residues. A disordered region spans residues 75-105 (CHPNDTENPRGSKDIKKNKNVTNRSKGTAEK). 2 N-linked (GlcNAc...) asparagine glycosylation sites follow: N94 and N97. The region spanning 140-378 (DYPIDLYYLM…QLIIDAYNSL (239 aa)) is the VWFA domain. The Mg(2+) site is built by S152 and S154. Residues S154, D157, D158, and E189 each coordinate Ca(2+). The interval 207-213 (CTNEQNC) is CX3CL1-binding. An N-linked (GlcNAc...) asparagine glycan is attached at N212. Residues N244, D246, P248, and E249 each contribute to the Ca(2+) site. Residue E249 participates in Mg(2+) binding. An N-linked (GlcNAc...) asparagine glycan is attached at N269. The tract at residues 295–314 (LPNDGQCHLKNDVYTMSHYY) is CX3CL1-binding. Residue A362 participates in Ca(2+) binding. Positions 383-465 (ILENSKLPEG…IILQFICECE (83 aa)) are interaction with TMEM182. 2 N-linked (GlcNAc...) asparagine glycosylation sites follow: N406 and N417. 4 I-EGF domains span residues 466 to 501 (CQGE…RHCE), 502 to 554 (CSTD…KFCE), 555 to 591 (CDNF…SACD), and 592 to 631 (CSLD…PTCE). N481 carries an N-linked (GlcNAc...) asparagine glycan. N-linked (GlcNAc...) asparagine glycosylation occurs at N520. N-linked (GlcNAc...) asparagine glycosylation is present at N584. N669 carries N-linked (GlcNAc...) asparagine glycosylation. The chain crosses the membrane as a helical span at residues 729-749 (IIPIVAGVVAGIVLIGLALLL). Topologically, residues 750–798 (IWKLLMIIHDRREFAKFEKERMNAKWDTGENPIYKSAVTTVVNPKYEGK) are cytoplasmic. The tract at residues 762–767 (EFAKFE) is signal for sorting from recycling endosomes; interaction with ACAP1. Position 777 is a phosphothreonine (T777). Y783 carries the post-translational modification Phosphotyrosine. S785 carries the post-translational modification Phosphoserine. The interval 785–792 (SAVTTVVN) is interaction with ITGB1BP1. Residue T789 is modified to Phosphothreonine. Position 794 is an N6-acetyllysine; alternate (K794). K794 participates in a covalent cross-link: Glycyl lysine isopeptide (Lys-Gly) (interchain with G-Cter in SUMO1); alternate.

The protein belongs to the integrin beta chain family. As to quaternary structure, interacts with seprase FAP (seprase); the interaction occurs at the cell surface of invadopodia membrane in a collagen-dependent manner. Heterodimer of an alpha and a beta subunit. Beta-1 associates with either alpha-1, alpha-2, alpha-3, alpha-4, alpha-5, alpha-6, alpha-7, alpha-8, alpha-9, alpha-10, alpha-11 or alpha-V. ITGA6:ITGB1 is found in a complex with CD9; interaction takes place in oocytes and is involved in sperm-egg fusion. Binds LGALS3BP and NMRK2, when associated with alpha-7, but not with alpha-5. Interacts with FLNA, FLNB, FLNC and RANBP9. Interacts with KRT1 in the presence of RACK1 and SRC. Interacts with JAML; integrin alpha-4/beta-1 may regulate leukocyte to endothelial cells adhesion by controlling JAML homodimerization. Interacts with RAB21. Interacts (via the cytoplasmic region) with RAB25 (via the hypervariable C-terminal region). Interacts with MYO10. Interacts with ITGB1BP1 (via C-terminal region); the interaction is a prerequisite for focal adhesion disassembly. Interacts with TLN1; the interaction is prevented by competitive binding of ITGB1BP1. Interacts with ACAP1; required for ITGB1 recycling. Interacts with ASAP3. Interacts with FERMT2; the interaction is inhibited in presence of ITGB1BP1. Interacts with DAB2. Interacts with FGR and HCK. Interacts with alpha-7A and alpha-7B in adult skeletal muscle. Interacts with alpha-7B in cardiomyocytes of adult heart. Interacts with EMP2; the interaction may be direct or indirect and ITGB1 has a heterodimer form. ITGA5:ITGB1 interacts with CCN3. ITGA4:ITGB1 is found in a ternary complex with CX3CR1 and CX3CL1. ITGA5:ITGB1 interacts with FBN1. ITGA5:ITGB1 acts as a receptor for fibronectin FN1 and mediates R-G-D-dependent cell adhesion to FN1. ITGA5:ITGB1 interacts with IL1B. Interacts with MDK. ITGA4:ITGB1 interacts with MDK; this interaction mediates MDK-induced osteoblast cells migration through PXN phosphorylation. ITGA6:ITGB1 interacts with MDK; this interaction mediates MDK-induced neurite-outgrowth. ITGA5:ITGB1 interacts with ACE2. Interacts with TMEM182 and LAMB1. Interacts with tensin TNS3; TNS3 also interacts with PEAK1, thus acting as an adapter molecule to bridge the association of PEAK1 with ITGB1. Interacts with tensin TNS4; the interaction displaces tensin TNS3 from the ITGB1 cytoplasmic tail and promotes ITGB1 stability. Integrin ITGA9:ITGB1 interacts with SPP1/OPN (via N-terminus). Integrin ITGA9:ITGB1 interacts with TNC/TNFN3 (via the 3rd Fibronectin type-III domain). Integrins ITGA4:ITGB1 and ITGA9:ITGB1 interact with SVEP1 (via Sushi domain 21); thereby inhibit Ca(2+) intracellular signaling and as a result repress vasocontraction. ITGA4:ITGB1 and ITGA5:ITGB1 interacts with SELP. Interacts with CD248. ITGA5:ITGB1 interacts with IGFBP1. ITGA4:ITGB1 interacts with BCAM. Interacts with ADGRG6.

The protein resides in the cell membrane. The protein localises to the cell projection. Its subcellular location is the invadopodium membrane. It localises to the ruffle membrane. It is found in the recycling endosome. The protein resides in the melanosome. The protein localises to the cell junction. Its subcellular location is the focal adhesion. It localises to the lamellipodium. It is found in the ruffle. Integrins alpha-1/beta-1, alpha-2/beta-1, alpha-10/beta-1 and alpha-11/beta-1 are receptors for collagen. Integrins alpha-1/beta-1 and alpha-2/beta-2 recognize the proline-hydroxylated sequence G-F-P-G-E-R in collagen. Integrins alpha-2/beta-1, alpha-3/beta-1, alpha-4/beta-1, alpha-5/beta-1, alpha-8/beta-1, alpha-10/beta-1, alpha-11/beta-1 and alpha-V/beta-1 are receptors for fibronectin. Alpha-4/beta-1 recognizes one or more domains within the alternatively spliced CS-1 and CS-5 regions of fibronectin. Integrin alpha-5/beta-1 is a receptor for fibrinogen. Integrin alpha-1/beta-1, alpha-2/beta-1, alpha-6/beta-1 and alpha-7/beta-1 are receptors for lamimin. Integrin alpha-6/beta-1 (ITGA6:ITGB1) is present in oocytes and is involved in sperm-egg fusion. Integrin alpha-4/beta-1 is a receptor for VCAM1 and recognizes the sequence Q-I-D-S in VCAM1. Integrin alpha-9/beta-1 is a receptor for VCAM1, cytotactin and osteopontin. It recognizes the sequence A-E-I-D-G-I-E-L in cytotactin. Integrin alpha-3/beta-1 is a receptor for epiligrin, thrombospondin and CSPG4. Integrin alpha-3/beta-1 provides a docking site for FAP (seprase) at invadopodia plasma membranes in a collagen-dependent manner and hence may participate in the adhesion, formation of invadopodia and matrix degradation processes, promoting cell invasion. Alpha-3/beta-1 may mediate with LGALS3 the stimulation by CSPG4 of endothelial cells migration. Integrin alpha-V/beta-1 is a receptor for vitronectin. Beta-1 integrins recognize the sequence R-G-D in a wide array of ligands. When associated with alpha-7/beta-1 integrin, regulates cell adhesion and laminin matrix deposition. Involved in promoting endothelial cell motility and angiogenesis. Involved in osteoblast compaction through the fibronectin fibrillogenesis cell-mediated matrix assembly process and the formation of mineralized bone nodules. May be involved in up-regulation of the activity of kinases such as PKC via binding to KRT1. Together with KRT1 and RACK1, serves as a platform for SRC activation or inactivation. Plays a mechanistic adhesive role during telophase, required for the successful completion of cytokinesis. ITGA4:ITGB1 binds to fractalkine (CX3CL1) and may act as its coreceptor in CX3CR1-dependent fractalkine signaling. ITGA4:ITGB1 and ITGA5:ITGB1 bind to PLA2G2A via a site (site 2) which is distinct from the classical ligand-binding site (site 1) and this induces integrin conformational changes and enhanced ligand binding to site 1. ITGA5:ITGB1 acts as a receptor for fibrillin-1 (FBN1) and mediates R-G-D-dependent cell adhesion to FBN1. ITGA5:ITGB1 is a receptor for IL1B and binding is essential for IL1B signaling. ITGA5:ITGB3 is a receptor for soluble CD40LG and is required for CD40/CD40LG signaling. Plays an important role in myoblast differentiation and fusion during skeletal myogenesis. ITGA9:ITGB1 may play a crucial role in SVEP1/polydom-mediated myoblast cell adhesion. Integrins ITGA9:ITGB1 and ITGA4:ITGB1 repress PRKCA-mediated L-type voltage-gated channel Ca(2+) influx and ROCK-mediated calcium sensitivity in vascular smooth muscle cells via their interaction with SVEP1, thereby inhibit vasocontraction. The protein is Integrin beta-1 of Camelus bactrianus (Bactrian camel).